The following is a 207-amino-acid chain: FMN-dependent NADH:quinone oxidoreductase 2 (207 aa).

FMN contacts are provided by residues Ser-10, 16 to 18, 96 to 99, and 141 to 144; these read SIS, MYNL, and SRGG.

Belongs to the azoreductase type 1 family. Homodimer. FMN is required as a cofactor.

The enzyme catalyses 2 a quinone + NADH + H(+) = 2 a 1,4-benzosemiquinone + NAD(+). It carries out the reaction N,N-dimethyl-1,4-phenylenediamine + anthranilate + 2 NAD(+) = 2-(4-dimethylaminophenyl)diazenylbenzoate + 2 NADH + 2 H(+). Functionally, quinone reductase that provides resistance to thiol-specific stress caused by electrophilic quinones. Its function is as follows. Also exhibits azoreductase activity. Catalyzes the reductive cleavage of the azo bond in aromatic azo compounds to the corresponding amines. The sequence is that of FMN-dependent NADH:quinone oxidoreductase 2 from Trichormus variabilis (strain ATCC 29413 / PCC 7937) (Anabaena variabilis).